Here is a 54-residue protein sequence, read N- to C-terminus: UPF0391 membrane protein Mfla_0947/Mfla_1091 (54 aa).

2 helical membrane passes run 6-26 (VIFF…IAAG) and 30-50 (IAKI…VAGI).

The protein belongs to the UPF0391 family.

It localises to the cell membrane. In Methylobacillus flagellatus (strain ATCC 51484 / DSM 6875 / VKM B-1610 / KT), this protein is UPF0391 membrane protein Mfla_0947/Mfla_1091.